The sequence spans 115 residues: Large ribosomal subunit protein uL24 (115 aa).

Belongs to the universal ribosomal protein uL24 family. As to quaternary structure, part of the 50S ribosomal subunit.

Its function is as follows. One of two assembly initiator proteins, it binds directly to the 5'-end of the 23S rRNA, where it nucleates assembly of the 50S subunit. In terms of biological role, one of the proteins that surrounds the polypeptide exit tunnel on the outside of the subunit. The polypeptide is Large ribosomal subunit protein uL24 (Synechocystis sp. (strain ATCC 27184 / PCC 6803 / Kazusa)).